Consider the following 295-residue polypeptide: MKTDTTLPIIAEDGDCGDSKRVRVADSGYTVGGQDRPVKLPKIENNGDVGTSEGTHVLVDALMAEVAIKDKDGKTNAGHGVVSVMGRQRAMTTAVSTVVDEIPSYDIFGIFDGLRLAKFFEDRLRRLVKEEVKACHGRGVAADWNKVMKSCFSEAVGTVGTTTSAVVTIVGKEEVIVLCRGGARVVLYSHDGVALPLCHIHHHKDGVEQILKIHKRKKIDDFIVLACDGLWDVVSDDDTYQLVKRCLYGKLPPDGCISESSSTKAAVILAELAIARGSKENINVIVIDLKSSTVS.

One can recognise a PPM-type phosphatase domain in the interval 78-289 (GHGVVSVMGR…ENINVIVIDL (212 aa)). 4 residues coordinate Mn(2+): D112, G113, D228, and E280.

Belongs to the PP2C family. Mg(2+) is required as a cofactor. The cofactor is Mn(2+).

The catalysed reaction is O-phospho-L-seryl-[protein] + H2O = L-seryl-[protein] + phosphate. The enzyme catalyses O-phospho-L-threonyl-[protein] + H2O = L-threonyl-[protein] + phosphate. In Arabidopsis thaliana (Mouse-ear cress), this protein is Probable protein phosphatase 2C 54.